Consider the following 181-residue polypeptide: Oligoribonuclease (181 aa).

Residues 8-171 enclose the Exonuclease domain; that stretch reads LIWVDLEMTG…DDIRESIAEL (164 aa). The active site involves Tyr-129.

Belongs to the oligoribonuclease family.

It localises to the cytoplasm. Functionally, 3'-to-5' exoribonuclease specific for small oligoribonucleotides. The polypeptide is Oligoribonuclease (Aliivibrio fischeri (strain ATCC 700601 / ES114) (Vibrio fischeri)).